Consider the following 300-residue polypeptide: 4-hydroxy-tetrahydrodipicolinate synthase (300 aa).

Pyruvate is bound at residue Thr-49. Catalysis depends on Tyr-137, which acts as the Proton donor/acceptor. Lys-165 acts as the Schiff-base intermediate with substrate in catalysis. Ile-207 is a pyruvate binding site.

This sequence belongs to the DapA family. Homotetramer; dimer of dimers.

It is found in the cytoplasm. The enzyme catalyses L-aspartate 4-semialdehyde + pyruvate = (2S,4S)-4-hydroxy-2,3,4,5-tetrahydrodipicolinate + H2O + H(+). The protein operates within amino-acid biosynthesis; L-lysine biosynthesis via DAP pathway; (S)-tetrahydrodipicolinate from L-aspartate: step 3/4. Catalyzes the condensation of (S)-aspartate-beta-semialdehyde [(S)-ASA] and pyruvate to 4-hydroxy-tetrahydrodipicolinate (HTPA). This is 4-hydroxy-tetrahydrodipicolinate synthase from Nitrosospira multiformis (strain ATCC 25196 / NCIMB 11849 / C 71).